The sequence spans 125 residues: Histone H2A (125 aa).

Residues 1 to 18 (MSGRGKGGKAKGKSKSRS) are compositionally biased toward basic residues. Residues 1–23 (MSGRGKGGKAKGKSKSRSSRAGL) are disordered. At serine 2 the chain carries N-acetylserine. Serine 2 bears the Phosphoserine mark. Residue glutamine 104 is modified to N5-methylglutamine.

Belongs to the histone H2A family. The nucleosome is a histone octamer containing two molecules each of H2A, H2B, H3 and H4 assembled in one H3-H4 heterotetramer and two H2A-H2B heterodimers. The octamer wraps approximately 147 bp of DNA.

The protein localises to the nucleus. It is found in the chromosome. Its function is as follows. Core component of nucleosome. Nucleosomes wrap and compact DNA into chromatin, limiting DNA accessibility to the cellular machineries which require DNA as a template. Histones thereby play a central role in transcription regulation, DNA repair, DNA replication and chromosomal stability. DNA accessibility is regulated via a complex set of post-translational modifications of histones, also called histone code, and nucleosome remodeling. This chain is Histone H2A, found in Urechis caupo (Innkeeper worm).